The primary structure comprises 260 residues: UPF0246 protein Bmul_1054/BMULJ_02209 (260 aa).

This sequence belongs to the UPF0246 family.

The polypeptide is UPF0246 protein Bmul_1054/BMULJ_02209 (Burkholderia multivorans (strain ATCC 17616 / 249)).